The following is a 179-amino-acid chain: Large ribosomal subunit protein uL5 (179 aa).

The protein belongs to the universal ribosomal protein uL5 family. Part of the 50S ribosomal subunit; part of the 5S rRNA/L5/L18/L25 subcomplex. Contacts the 5S rRNA and the P site tRNA. Forms a bridge to the 30S subunit in the 70S ribosome.

This is one of the proteins that bind and probably mediate the attachment of the 5S RNA into the large ribosomal subunit, where it forms part of the central protuberance. In the 70S ribosome it contacts protein S13 of the 30S subunit (bridge B1b), connecting the 2 subunits; this bridge is implicated in subunit movement. Contacts the P site tRNA; the 5S rRNA and some of its associated proteins might help stabilize positioning of ribosome-bound tRNAs. This chain is Large ribosomal subunit protein uL5, found in Dehalococcoides mccartyi (strain ATCC BAA-2100 / JCM 16839 / KCTC 5957 / BAV1).